An 85-amino-acid chain; its full sequence is Large ribosomal subunit protein bL27 (85 aa).

This sequence belongs to the bacterial ribosomal protein bL27 family.

This Persephonella marina (strain DSM 14350 / EX-H1) protein is Large ribosomal subunit protein bL27.